The sequence spans 712 residues: Ribosome-releasing factor 2, mitochondrial (712 aa).

A mitochondrion-targeting transit peptide spans 1–29; sequence MLRCAWQNGPRQSNRWLRHLSNQIWKRSY. The tr-type G domain occupies 31-310; it reads SKIRNIGILA…AVNSYLPAPE (280 aa). GTP is bound by residues 40–47, 104–108, and 158–161; these read AHIDAGKT, DTPGH, and NKMD.

The protein belongs to the TRAFAC class translation factor GTPase superfamily. Classic translation factor GTPase family. EF-G/EF-2 subfamily.

Its subcellular location is the mitochondrion. In terms of biological role, mitochondrial GTPase that mediates the disassembly of ribosomes from messenger RNA at the termination of mitochondrial protein biosynthesis. Not involved in the GTP-dependent ribosomal translocation step during translation elongation. The sequence is that of Ribosome-releasing factor 2, mitochondrial from Drosophila yakuba (Fruit fly).